The primary structure comprises 335 residues: 2-acylglycerol O-acyltransferase 2 (335 aa).

Transmembrane regions (helical) follow at residues 24 to 44 (WAVS…LLLF) and 104 to 124 (YIMG…NFCT). Asn-206 carries an N-linked (GlcNAc...) asparagine glycan.

The protein belongs to the diacylglycerol acyltransferase family.

It is found in the endoplasmic reticulum membrane. It localises to the cytoplasm. The protein localises to the perinuclear region. The catalysed reaction is a 2-acylglycerol + an acyl-CoA = a 1,2-diacylglycerol + CoA. It catalyses the reaction a 2-acylglycerol + an acyl-CoA = a 1,2-diacyl-sn-glycerol + CoA. It carries out the reaction a 2-acylglycerol + an acyl-CoA = a 2,3-diacyl-sn-glycerol + CoA. The enzyme catalyses a 1-acylglycerol + an acyl-CoA = a 1,2-diacylglycerol + CoA. The catalysed reaction is a 1-acylglycerol + an acyl-CoA = a 1,3-diacylglycerol + CoA. It catalyses the reaction 1-O-alkylglycerol + an acyl-CoA = 1-O-alkyl-3-acylglycerol + CoA. It carries out the reaction an acyl-CoA + a 1,2-diacyl-sn-glycerol = a triacyl-sn-glycerol + CoA. The protein operates within glycerolipid metabolism; triacylglycerol biosynthesis. Involved in glycerolipid synthesis and lipid metabolism. Catalyzes the formation of diacylglycerol, the precursor of triacylglycerol, by transferring the acyl chain of a fatty acyl-CoA to a monoacylglycerol. Plays a central role in absorption of dietary fat in the small intestine by catalyzing the resynthesis of triacylglycerol in enterocytes. Has a preference toward monoacylglycerols containing unsaturated fatty acids in an order of C18:3 &gt; C18:2 &gt; C18:1 &gt; C18:0 at sn-2. Able to use 1-monoalkylglycerol (1-MAkG, 1-O-alkylglycerol) as an acyl acceptor for the synthesis of monoalkyl-monoacylglycerol (MAMAG, 1-O-alkyl-3-acylglycerol or 1-O-alkyl-2-acylglycerol) and subsequently, with lower efficiency, may add another acyl chain producing monoalkyl-diacylglycerol (MADAG, 1-O-alkyl-2,3-diacylglycerol). Possesses weak but significant activity with diacylglycerol as substrate, producing triacylglycerol (triacyl-sn-glycerol). In Xenopus tropicalis (Western clawed frog), this protein is 2-acylglycerol O-acyltransferase 2 (mogat2).